The chain runs to 382 residues: 8-amino-7-oxononanoate synthase (382 aa).

Positions 22 and 29 each coordinate substrate. Pyridoxal 5'-phosphate is bound at residue 109–110 (GF). A substrate-binding site is contributed by H134. Residues S182, 207-210 (DDAH), and 233-236 (TLSK) each bind pyridoxal 5'-phosphate. K236 bears the N6-(pyridoxal phosphate)lysine mark. Substrate is bound at residue T345.

Belongs to the class-II pyridoxal-phosphate-dependent aminotransferase family. BioF subfamily. As to quaternary structure, homodimer. Requires pyridoxal 5'-phosphate as cofactor.

The enzyme catalyses 6-carboxyhexanoyl-[ACP] + L-alanine + H(+) = (8S)-8-amino-7-oxononanoate + holo-[ACP] + CO2. It participates in cofactor biosynthesis; biotin biosynthesis. Functionally, catalyzes the decarboxylative condensation of pimeloyl-[acyl-carrier protein] and L-alanine to produce 8-amino-7-oxononanoate (AON), [acyl-carrier protein], and carbon dioxide. The polypeptide is 8-amino-7-oxononanoate synthase (Granulibacter bethesdensis (strain ATCC BAA-1260 / CGDNIH1)).